The following is a 137-amino-acid chain: Holo-[acyl-carrier-protein] synthase (137 aa).

Positions 8 and 57 each coordinate Mg(2+).

Belongs to the P-Pant transferase superfamily. AcpS family. Mg(2+) is required as a cofactor.

Its subcellular location is the cytoplasm. The catalysed reaction is apo-[ACP] + CoA = holo-[ACP] + adenosine 3',5'-bisphosphate + H(+). In terms of biological role, transfers the 4'-phosphopantetheine moiety from coenzyme A to a Ser of acyl-carrier-protein. This is Holo-[acyl-carrier-protein] synthase from Cereibacter sphaeroides (strain ATCC 17029 / ATH 2.4.9) (Rhodobacter sphaeroides).